The chain runs to 436 residues: 3-ketoacyl-CoA thiolase (436 aa).

The active-site Acyl-thioester intermediate is the Cys99. Catalysis depends on proton acceptor residues His392 and Cys422.

This sequence belongs to the thiolase-like superfamily. Thiolase family. As to quaternary structure, heterotetramer of two alpha chains (FadJ) and two beta chains (FadI).

It localises to the cytoplasm. The catalysed reaction is an acyl-CoA + acetyl-CoA = a 3-oxoacyl-CoA + CoA. It functions in the pathway lipid metabolism; fatty acid beta-oxidation. Its function is as follows. Catalyzes the final step of fatty acid oxidation in which acetyl-CoA is released and the CoA ester of a fatty acid two carbons shorter is formed. In Salmonella paratyphi C (strain RKS4594), this protein is 3-ketoacyl-CoA thiolase.